Here is a 423-residue protein sequence, read N- to C-terminus: MSKLVAPHGGKGLVCCLLEGKALEDEKKKAAGLKQIEISSRAKGDLIMMGIGGFSPLNGFMNKADWKSVCEKMTLTDGTFWPVPVTLDVSAAEAKSIKAGEEVALVRKGEVMATMKVEEIYEMTEADKKMECELVFKGEGPDSEKFWEVAPEDHPGVKMVLAQKEYNIAGPVKVLSQGEFPEKFPGVYMTPAQLRAKMDERGWQKVAALQLRNPMHRSHEYLAKIGVEVCDGVVIHSLVGSLKPGDIPAEVRVKCIDTLVDKYFVKDFVIQAGYPLDMRYAGPREALLHATFRQNYGINNLLVGRDHAGVGDFYGMFEAQEIFRKMPTPADSGKRLLCEPLNIDWTFYCKKCDGMASMRTCPHGKEDRVILSGTKLRKMLSEGADVPDHFGRDEVLAILREYYSGLTEKVEVKMQRAASGSTM.

Belongs to the sulfate adenylyltransferase family.

It catalyses the reaction sulfate + ATP + H(+) = adenosine 5'-phosphosulfate + diphosphate. It functions in the pathway sulfur metabolism; hydrogen sulfide biosynthesis; sulfite from sulfate: step 1/3. This Desulfovibrio desulfuricans (strain ATCC 27774 / DSM 6949 / MB) protein is Sulfate adenylyltransferase.